A 216-amino-acid chain; its full sequence is Thymidylate kinase (216 aa).

9–16 (GIEGSGKT) serves as a coordination point for ATP.

It belongs to the thymidylate kinase family.

It carries out the reaction dTMP + ATP = dTDP + ADP. Its function is as follows. Phosphorylation of dTMP to form dTDP in both de novo and salvage pathways of dTTP synthesis. The polypeptide is Thymidylate kinase (Syntrophotalea carbinolica (strain DSM 2380 / NBRC 103641 / GraBd1) (Pelobacter carbinolicus)).